We begin with the raw amino-acid sequence, 525 residues long: Sodium-dependent lysophosphatidylcholine symporter 1 (525 aa).

Residues methionine 1–glycine 29 are disordered. Residues methionine 1–lysine 32 are Cytoplasmic-facing. The chain crosses the membrane as a helical span at residues leucine 33 to phenylalanine 62. At leucine 63 to tyrosine 73 the chain is on the extracellular side. Residues alanine 74 to phenylalanine 94 form a helical membrane-spanning segment. Residues phenylalanine 95–arginine 106 lie on the Cytoplasmic side of the membrane. A helical membrane pass occupies residues leucine 107–tryptophan 126. Topologically, residues phenylalanine 127–valine 137 are extracellular. The helical transmembrane segment at isoleucine 138–threonine 162 threads the bilayer. Topologically, residues methionine 163–glutamine 169 are cytoplasmic. Residues serine 170 to glutamate 201 traverse the membrane as a helical segment. At asparagine 202 to isoleucine 226 the chain is on the extracellular side. Cysteines 205 and 458 form a disulfide. 2 N-linked (GlcNAc...) asparagine glycosylation sites follow: asparagine 216 and asparagine 225. The chain crosses the membrane as a helical span at residues threonine 227 to leucine 260. Over glycine 261–proline 291 the chain is Cytoplasmic. Residues tyrosine 292–threonine 318 traverse the membrane as a helical segment. Residues tyrosine 319 to asparagine 329 lie on the Extracellular side of the membrane. The helical transmembrane segment at isoleucine 330–phenylalanine 348 threads the bilayer. Residues leucine 349–phenylalanine 352 lie on the Cytoplasmic side of the membrane. The chain crosses the membrane as a helical span at residues glycine 353–leucine 374. The Extracellular portion of the chain corresponds to methionine 375 to serine 377. Residues asparagine 378 to lysine 414 traverse the membrane as a helical segment. Residues asparagine 415–isoleucine 424 lie on the Cytoplasmic side of the membrane. A helical membrane pass occupies residues phenylalanine 425–alanine 451. The Extracellular portion of the chain corresponds to glycine 452–glutamine 463. A helical transmembrane segment spans residues valine 464 to phenylalanine 487. Residues isoleucine 488–valine 525 lie on the Cytoplasmic side of the membrane.

Belongs to the major facilitator superfamily.

It is found in the cell membrane. Its subcellular location is the endoplasmic reticulum membrane. The enzyme catalyses a 1-acyl-sn-glycero-3-phosphocholine(in) + Na(+)(in) = a 1-acyl-sn-glycero-3-phosphocholine(out) + Na(+)(out). It catalyses the reaction 1-(4Z,7Z,10Z,13Z,16Z,19Z-docosahexaenoyl)-sn-glycero-3-phosphocholine(in) + Na(+)(in) = 1-(4Z,7Z,10Z,13Z,16Z,19Z-docosahexaenoyl)-sn-glycero-3-phosphocholine(out) + Na(+)(out). It carries out the reaction 1-(9Z-octadecenoyl)-sn-glycero-3-phosphocholine(in) + Na(+)(in) = 1-(9Z-octadecenoyl)-sn-glycero-3-phosphocholine(out) + Na(+)(out). The catalysed reaction is 1-hexadecanoyl-sn-glycero-3-phosphocholine(in) + Na(+)(in) = 1-hexadecanoyl-sn-glycero-3-phosphocholine(out) + Na(+)(out). The enzyme catalyses a 1-acyl-sn-glycero-3-phosphoethanolamine(in) + Na(+)(in) = a 1-acyl-sn-glycero-3-phosphoethanolamine(out) + Na(+)(out). In terms of biological role, sodium-dependent lysophosphatidylcholine (LPC) symporter, which plays an essential role for blood-brain barrier formation and function. Specifically expressed in endothelium of the blood-brain barrier of micro-vessels and transports LPC into the brain. Transport of LPC is essential because it constitutes the major mechanism by which docosahexaenoic acid (DHA), an omega-3 fatty acid that is essential for normal brain growth and cognitive function, enters the brain. Transports LPC carrying long-chain fatty acids such LPC oleate and LPC palmitate with a minimum acyl chain length of 14 carbons. Does not transport docosahexaenoic acid in unesterified fatty acid. This is Sodium-dependent lysophosphatidylcholine symporter 1 (mfsd2a) from Xenopus tropicalis (Western clawed frog).